A 240-amino-acid chain; its full sequence is Protein FAM246C (240 aa).

Disordered stretches follow at residues Met-1 to Ala-117 and Leu-161 to Ala-240. Basic and acidic residues-rich tracts occupy residues Glu-19–Pro-31 and Ala-60–Glu-74. The span at Ser-165–Ala-175 shows a compositional bias: pro residues. The span at Ala-176–Ala-187 shows a compositional bias: low complexity.

It belongs to the FAM246 family.

This Homo sapiens (Human) protein is Protein FAM246C.